The sequence spans 782 residues: Sulfate permease family protein 3 (782 aa).

12 helical membrane passes run 30 to 52 (YACSPSKCIHSLLSFLPIITWLP), 64 to 84 (LSGGLTMAVFSVPQGIALASI), 86 to 106 (GVPPVYGLYTAIFPSFLYIFF), 113 to 133 (ALGGFAVLSLMTHGAIEKVML), 196 to 216 (IHVATTIIFLAGVIQVFMGVF), 232 to 252 (GFVVGGGIHVFFAQIGNMLGI), 274 to 294 (LDNVHIPTVCISLSSFLFLVF), 302 to 322 (WLNSAFNYPVPFELVLVVVGI), 359 to 379 (HIGLNAAAIAITAVAIHITVA), 398 to 418 (ALGFVGVLSSFFPVFPVTSGF), 433 to 453 (LTCLFSSLALLSVILCIGPAL), and 497 to 517 (FFLTVCYDMGEGLLMAIGFAV). Residues 546 to 700 (KRDLERIQGN…NKVGDAVKAA (155 aa)) form the STAS domain. A compositionally biased stretch (acidic residues) spans 728–742 (IDEESSDSNDNDDAE). Residues 728 to 782 (IDEESSDSNDNDDAEIQERITEESENSEEVMSETSVSIEDATSLTSSRNSINSEE) form a disordered region. The segment covering 767–782 (DATSLTSSRNSINSEE) has biased composition (polar residues).

Belongs to the SLC26A/SulP transporter (TC 2.A.53) family.

It localises to the membrane. In terms of biological role, possible sulfate transporter. In Caenorhabditis elegans, this protein is Sulfate permease family protein 3 (sulp-3).